A 36-amino-acid polypeptide reads, in one-letter code: Lambda-hexatoxin-Hv1b (36 aa).

4 cysteine pairs are disulfide-bonded: Cys-3–Cys-17, Cys-10–Cys-22, Cys-13–Cys-14, and Cys-16–Cys-33.

Belongs to the neurotoxin 11 (kappa toxin) family. Expressed by the venom gland.

The protein localises to the secreted. Its function is as follows. This excitatory toxin inhibits insect calcium-activated potassium (KCa) channels (Slo-type). This Hadronyche versuta (Blue mountains funnel-web spider) protein is Lambda-hexatoxin-Hv1b.